Here is a 338-residue protein sequence, read N- to C-terminus: Cytoskeleton protein RodZ (338 aa).

The Cytoplasmic segment spans residues 1–111; sequence MNTEATHDQN…LGKRRKKRDG (111 aa). The region spanning 19 to 71 is the HTH cro/C1-type domain; sequence LRNAREQLGLSQQAVAERLCLKVSTVRDIEEDKAPADLASTFLRGYIRSYARL. Residues 30 to 49 constitute a DNA-binding region (H-T-H motif); sequence QQAVAERLCLKVSTVRDIEE. The helical; Signal-anchor for type II membrane protein transmembrane segment at 112-132 threads the bilayer; that stretch reads WLMTFTWLVLFVVIGLSGAWW. Residues 133–338 are Periplasmic-facing; sequence WQDHKAQQEE…TLNAEQSPAQ (206 aa). A compositionally biased stretch (polar residues) spans 155-169; that stretch reads NANGTNSQSIPLENS. A disordered region spans residues 155 to 240; it reads NANGTNSQSI…TTPDTATPLP (86 aa). Residues 170 to 188 show a composition bias toward low complexity; that stretch reads TTTVPEATPAPAAPVDTTA. Positions 203-217 are enriched in polar residues; the sequence is EPQQNAVVPPSQANV. Positions 218-240 are enriched in low complexity; it reads DTATTAPAAPATTTTPDTATPLP.

It belongs to the RodZ family.

Its subcellular location is the cell inner membrane. Its function is as follows. Cytoskeletal protein that is involved in cell-shape control through regulation of the length of the long axis. This chain is Cytoskeleton protein RodZ, found in Escherichia fergusonii (strain ATCC 35469 / DSM 13698 / CCUG 18766 / IAM 14443 / JCM 21226 / LMG 7866 / NBRC 102419 / NCTC 12128 / CDC 0568-73).